A 257-amino-acid polypeptide reads, in one-letter code: uncharacterized protein (257 aa).

Disordered regions lie at residues 86–119 and 182–206; these read SDEE…RPLS and STPL…TDGQ. Residues 196–206 are compositionally biased toward polar residues; the sequence is PTPTSQLTDGQ.

This is an uncharacterized protein from Invertebrate iridescent virus 3 (IIV-3).